The sequence spans 141 residues: Hemoglobin subunit beta-C (141 aa).

Residues 1–141 (PNKALITGFW…VASALAHRYH (141 aa)) form the Globin domain. Positions 58 and 87 each coordinate heme b.

This sequence belongs to the globin family. Heterotetramer of two alpha chains and two beta chains. In terms of tissue distribution, red blood cells.

Its function is as follows. Involved in oxygen transport from the lung to the various peripheral tissues. This Ovis aries musimon (Mouflon) protein is Hemoglobin subunit beta-C (HBBC).